The sequence spans 93 residues: Probable endoribonuclease MazF1 (93 aa).

It belongs to the PemK/MazF family. Forms a complex with cognate antitoxin MazE1.

Its function is as follows. Toxic component of a type II toxin-antitoxin (TA) system, its cognate antitoxin is MazE1. Probably an endoribonuclease. In Mycobacterium tuberculosis (strain ATCC 25618 / H37Rv), this protein is Probable endoribonuclease MazF1 (mazF1).